Here is a 92-residue protein sequence, read N- to C-terminus: Small ribosomal subunit protein uS19c (92 aa).

The protein belongs to the universal ribosomal protein uS19 family.

It localises to the plastid. It is found in the chloroplast. Its function is as follows. Protein S19 forms a complex with S13 that binds strongly to the 16S ribosomal RNA. This Pyropia yezoensis (Susabi-nori) protein is Small ribosomal subunit protein uS19c.